The following is a 600-amino-acid chain: Zinc metalloproteinase-disintegrin-like stejnihagin-A (600 aa).

An N-terminal signal peptide occupies residues 1 to 20; sequence MIEVLLVTICLAVFPYQGSS. A propeptide spanning residues 21 to 191 is cleaved from the precursor; it reads IILESGNVND…KASQLVVTAE (171 aa). Gln-192 is modified (pyrrolidone carboxylic acid). The 192-residue stretch at 198–389 folds into the Peptidase M12B domain; that stretch reads RYVKLAIVAD…YNPQCILNAP (192 aa). 3 disulfide bridges follow: Cys-306–Cys-384, Cys-346–Cys-368, and Cys-348–Cys-351. N-linked (GlcNAc...) asparagine glycosylation is present at Asn-317. His-331 is a binding site for Zn(2+). Glu-332 is a catalytic residue. Residues His-335 and His-341 each contribute to the Zn(2+) site. An N-linked (GlcNAc...) asparagine glycan is attached at Asn-367. Residues 397–483 enclose the Disintegrin domain; sequence PPVCGNELLE…DCPTDDFHRN (87 aa). Val-399, Asn-402, Leu-404, Glu-406, Glu-409, and Asp-412 together coordinate Ca(2+). 14 cysteine pairs are disulfide-bonded: Cys-400/Cys-429, Cys-411/Cys-424, Cys-413/Cys-419, Cys-423/Cys-446, Cys-437/Cys-443, Cys-442/Cys-468, Cys-455/Cys-475, Cys-462/Cys-494, Cys-487/Cys-499, Cys-506/Cys-556, Cys-521/Cys-565, Cys-534/Cys-544, Cys-551/Cys-587, and Cys-581/Cys-593. The D/ECD-tripeptide motif lies at 461 to 463; it reads ECD. N-linked (GlcNAc...) asparagine glycosylation is present at Asn-568.

This sequence belongs to the venom metalloproteinase (M12B) family. P-III subfamily. P-IIIa sub-subfamily. In terms of assembly, monomer. Requires Zn(2+) as cofactor. Expressed by the venom gland.

It is found in the secreted. In terms of biological role, this metalloproteinase-disintegrin-like impairs hemostasis in the envenomed animal. The chain is Zinc metalloproteinase-disintegrin-like stejnihagin-A from Trimeresurus stejnegeri (Chinese green tree viper).